Reading from the N-terminus, the 276-residue chain is Large ribosomal subunit protein uL2 (276 aa).

Disordered regions lie at residues 1–50 and 206–276; these read MPIK…GRVT and GKAG…SKKR. The span at 7-19 shows a compositional bias: polar residues; that stretch reads RPTTPTRRFQTVV. Residues 20-38 are compositionally biased toward basic and acidic residues; it reads SREDITKQTPEKSLVESKK.

It belongs to the universal ribosomal protein uL2 family. Part of the 50S ribosomal subunit. Forms a bridge to the 30S subunit in the 70S ribosome.

Functionally, one of the primary rRNA binding proteins. Required for association of the 30S and 50S subunits to form the 70S ribosome, for tRNA binding and peptide bond formation. It has been suggested to have peptidyltransferase activity; this is somewhat controversial. Makes several contacts with the 16S rRNA in the 70S ribosome. The polypeptide is Large ribosomal subunit protein uL2 (Solibacter usitatus (strain Ellin6076)).